A 605-amino-acid polypeptide reads, in one-letter code: Translation factor GUF1 homolog, chloroplastic (605 aa).

A tr-type G domain is found at 7–189 (RRIRNFSIIA…RIVQVVPPPR (183 aa)). Residues 16 to 23 (AHIDHGKS), 82 to 86 (DTPGH), and 136 to 139 (NKID) each bind GTP.

This sequence belongs to the TRAFAC class translation factor GTPase superfamily. Classic translation factor GTPase family. LepA subfamily.

Its subcellular location is the plastid. It is found in the chloroplast. The catalysed reaction is GTP + H2O = GDP + phosphate + H(+). Functionally, promotes chloroplast protein synthesis. May act as a fidelity factor of the translation reaction, by catalyzing a one-codon backward translocation of tRNAs on improperly translocated ribosomes. The sequence is that of Translation factor GUF1 homolog, chloroplastic from Ostreococcus lucimarinus (strain CCE9901).